Reading from the N-terminus, the 506-residue chain is Maturase K (506 aa).

Belongs to the intron maturase 2 family. MatK subfamily.

It is found in the plastid. The protein localises to the chloroplast. Functionally, usually encoded in the trnK tRNA gene intron. Probably assists in splicing its own and other chloroplast group II introns. This chain is Maturase K, found in Rhododendron tomentosum (Marsh Labrador tea).